Here is a 314-residue protein sequence, read N- to C-terminus: Olfactory receptor 8D4 (314 aa).

The Extracellular portion of the chain corresponds to 1–25; sequence MGVKNHSTVTEFLLSGLTEQAELQL. N-linked (GlcNAc...) asparagine glycosylation is present at Asn5. Residues 26-46 traverse the membrane as a helical segment; that stretch reads PLFCLFLGIYTVTVVGNLSMI. Topologically, residues 47–54 are cytoplasmic; it reads SIIRLNRQ. The chain crosses the membrane as a helical span at residues 55 to 75; sequence LHTPMYYFLSSLSFLDFCYSS. Residues 76–99 lie on the Extracellular side of the membrane; the sequence is VITPKMLSGFLCRDRSISYSGCMI. A disulfide bond links Cys97 and Cys189. Residues 100–120 form a helical membrane-spanning segment; that stretch reads QLFFFCVCVISECYMLAAMAC. At 121-139 the chain is on the cytoplasmic side; it reads DRYVAICSPLLYRVIMSPR. Residues 140 to 160 traverse the membrane as a helical segment; the sequence is VCSLLVAAVFSVGFTDAVIHG. Over 161 to 197 the chain is Extracellular; it reads GCILRLSFCGSNIIKHYFCDIVPLIKLSCSSTYIDEL. The helical transmembrane segment at 198–217 threads the bilayer; the sequence is LIFVIGGFNMVATSLTIIIS. Topologically, residues 218–237 are cytoplasmic; it reads YAFILTSILRIHSKKGRCKA. A helical transmembrane segment spans residues 238–258; the sequence is FSTCSSHLTAVLMFYGSLMSM. Residues 259–271 lie on the Extracellular side of the membrane; sequence YLKPASSSSLTQE. The chain crosses the membrane as a helical span at residues 272-292; the sequence is KVSSVFYTTVILMLNPLIYSL. Residues 293 to 314 lie on the Cytoplasmic side of the membrane; that stretch reads RNNEVRNALMKLLRRKISLSPG.

The protein belongs to the G-protein coupled receptor 1 family.

The protein resides in the cell membrane. In terms of biological role, odorant receptor. In Homo sapiens (Human), this protein is Olfactory receptor 8D4 (OR8D4).